The chain runs to 269 residues: Formamidopyrimidine-DNA glycosylase (269 aa).

P2 acts as the Schiff-base intermediate with DNA in catalysis. The active-site Proton donor is E3. K57 serves as the catalytic Proton donor; for beta-elimination activity. Residues H90, R109, and K150 each coordinate DNA. Residues 235–269 (QVYGRKGEPCRVCGTPIVASKHAQRATFYCRQCQK) form an FPG-type zinc finger. R259 acts as the Proton donor; for delta-elimination activity in catalysis.

This sequence belongs to the FPG family. In terms of assembly, monomer. It depends on Zn(2+) as a cofactor.

The catalysed reaction is Hydrolysis of DNA containing ring-opened 7-methylguanine residues, releasing 2,6-diamino-4-hydroxy-5-(N-methyl)formamidopyrimidine.. The enzyme catalyses 2'-deoxyribonucleotide-(2'-deoxyribose 5'-phosphate)-2'-deoxyribonucleotide-DNA = a 3'-end 2'-deoxyribonucleotide-(2,3-dehydro-2,3-deoxyribose 5'-phosphate)-DNA + a 5'-end 5'-phospho-2'-deoxyribonucleoside-DNA + H(+). Its function is as follows. Involved in base excision repair of DNA damaged by oxidation or by mutagenic agents. Acts as a DNA glycosylase that recognizes and removes damaged bases. Has a preference for oxidized purines, such as 7,8-dihydro-8-oxoguanine (8-oxoG). Has AP (apurinic/apyrimidinic) lyase activity and introduces nicks in the DNA strand. Cleaves the DNA backbone by beta-delta elimination to generate a single-strand break at the site of the removed base with both 3'- and 5'-phosphates. The chain is Formamidopyrimidine-DNA glycosylase from Enterobacter sp. (strain 638).